Consider the following 387-residue polypeptide: Small ribosomal subunit protein uS5m (387 aa).

A mitochondrion-targeting transit peptide spans 1–22 (MLRSFSHFLQIGSRRQPTYFRC). The disordered stretch occupies residues 33 to 87 (FKNDPKKELNSNLNEKSVEESSKNETKEQFNSSSIPRESESEGKTASNTSPLSPK). A compositionally biased stretch (basic and acidic residues) spans 48–60 (KSVEESSKNETKE). Ser85 is modified (phosphoserine). The S5 DRBM domain occupies 225–288 (LMFVPLVRRR…GRAVKNMVYI (64 aa)).

The protein belongs to the universal ribosomal protein uS5 family. As to quaternary structure, component of the mitochondrial small ribosomal subunit (mt-SSU). Mature yeast 74S mitochondrial ribosomes consist of a small (37S) and a large (54S) subunit. The 37S small subunit contains a 15S ribosomal RNA (15S mt-rRNA) and at least 32 different proteins. The 54S large subunit contains a 21S rRNA (21S mt-rRNA) and at least 45 different proteins. uS3m, uS4m and uS5m form the narrow entry site of the mRNA channel.

The protein resides in the mitochondrion. In terms of biological role, component of the mitochondrial ribosome (mitoribosome), a dedicated translation machinery responsible for the synthesis of mitochondrial genome-encoded proteins, including at least some of the essential transmembrane subunits of the mitochondrial respiratory chain. The mitoribosomes are attached to the mitochondrial inner membrane and translation products are cotranslationally integrated into the membrane. This is Small ribosomal subunit protein uS5m (mrp5) from Schizosaccharomyces pombe (strain 972 / ATCC 24843) (Fission yeast).